The chain runs to 53 residues: ComX pheromone (53 aa).

The propeptide occupies Met1–Tyr46. Trp51 carries the 3'-geranyl-2',N2-cyclotryptophan lipid modification.

As to quaternary structure, interacts directly with the sensor histidine kinase ComP and stimulates its activity. In terms of processing, trp-51 is modified by geranylation, which is essential for activity. Modified by the tryptophan prenyltransferase ComQ before export to the extracellular environment. The type of isoprenyl derivative differs among the different pherotypes and depends on ComX primary sequence.

It localises to the secreted. Functionally, part of a major quorum-sensing system that regulates the development of genetic competence. Acts through the activation of the two-component regulatory system ComP/ComA composed of a sensor histidine kinase, ComP, and a response regulator, ComA. The protein is ComX pheromone of Bacillus mojavensis.